A 427-amino-acid polypeptide reads, in one-letter code: UDP-N-acetylglucosamine 1-carboxyvinyltransferase (427 aa).

Residue 22 to 23 (KN) coordinates phosphoenolpyruvate. Arginine 92 contributes to the UDP-N-acetyl-alpha-D-glucosamine binding site. Aspartate 116 serves as the catalytic Proton donor. UDP-N-acetyl-alpha-D-glucosamine-binding residues include aspartate 312 and methionine 334.

This sequence belongs to the EPSP synthase family. MurA subfamily.

It is found in the cytoplasm. The catalysed reaction is phosphoenolpyruvate + UDP-N-acetyl-alpha-D-glucosamine = UDP-N-acetyl-3-O-(1-carboxyvinyl)-alpha-D-glucosamine + phosphate. It functions in the pathway cell wall biogenesis; peptidoglycan biosynthesis. Cell wall formation. Adds enolpyruvyl to UDP-N-acetylglucosamine. In Borrelia garinii subsp. bavariensis (strain ATCC BAA-2496 / DSM 23469 / PBi) (Borreliella bavariensis), this protein is UDP-N-acetylglucosamine 1-carboxyvinyltransferase.